We begin with the raw amino-acid sequence, 415 residues long: Histidine--tRNA ligase (415 aa).

It belongs to the class-II aminoacyl-tRNA synthetase family. Homodimer.

Its subcellular location is the cytoplasm. It carries out the reaction tRNA(His) + L-histidine + ATP = L-histidyl-tRNA(His) + AMP + diphosphate + H(+). This is Histidine--tRNA ligase from Clostridium botulinum (strain 657 / Type Ba4).